Here is a 543-residue protein sequence, read N- to C-terminus: Ipecac alkaloid beta-glucosidase 3 (543 aa).

A beta-D-glucoside contacts are provided by residues Gln-36, His-140, 185–186 (NE), Tyr-350, Glu-422, Trp-471, and Phe-487. Glu-186 serves as the catalytic Proton donor. Glu-422 acts as the Nucleophile in catalysis.

It belongs to the glycosyl hydrolase 1 family.

The protein resides in the cytoplasm. It is found in the cytosol. The catalysed reaction is deacetylipecoside + H2O = deacetylipecoside aglycone + D-glucose. It catalyses the reaction deacetylisoipecoside + H2O = deacetylisoipecoside aglycone + D-glucose. The protein operates within alkaloid biosynthesis. In terms of biological role, beta-glucosidase catalyzing deglucosylation on N-deacetylisoipecoside and N-deacetylipecoside. This chain is Ipecac alkaloid beta-glucosidase 3, found in Carapichea ipecacuanha (Ipecac).